The following is a 92-amino-acid chain: Beta-2-microglobulin (92 aa).

The 90-residue stretch at 2 to 91 (PQIQVYTRHP…VSMKEPKTVN (90 aa)) folds into the Ig-like C1-type domain. Cys-22 and Cys-77 form a disulfide bridge.

Belongs to the beta-2-microglobulin family. In terms of assembly, heterodimer of an alpha chain and a beta chain. Beta-2-microglobulin is the beta-chain of major histocompatibility complex class I molecules.

The protein resides in the secreted. Functionally, component of the class I major histocompatibility complex (MHC). Involved in the presentation of peptide antigens to the immune system. In Mus caroli (Ryukyu mouse), this protein is Beta-2-microglobulin (B2m).